The primary structure comprises 372 residues: Glutamate 5-kinase (372 aa).

Position 14 (Lys14) interacts with ATP. Substrate is bound by residues Ser54, Asp141, and Asn153. 173-174 (TD) provides a ligand contact to ATP. The PUA domain occupies 280–358 (RGHVVIDDGA…GEIESVLGYM (79 aa)).

The protein belongs to the glutamate 5-kinase family.

The protein localises to the cytoplasm. It catalyses the reaction L-glutamate + ATP = L-glutamyl 5-phosphate + ADP. The protein operates within amino-acid biosynthesis; L-proline biosynthesis; L-glutamate 5-semialdehyde from L-glutamate: step 1/2. Functionally, catalyzes the transfer of a phosphate group to glutamate to form L-glutamate 5-phosphate. This chain is Glutamate 5-kinase, found in Paraburkholderia phymatum (strain DSM 17167 / CIP 108236 / LMG 21445 / STM815) (Burkholderia phymatum).